The chain runs to 359 residues: DNA ligase (359 aa).

Residues 32 to 35, arginine 39, 55 to 57, and glutamate 93 contribute to the ATP site; these read EIKY and RVS. The active-site N6-AMP-lysine intermediate is the lysine 34. Glutamate 217 is a binding site for a divalent metal cation. ATP contacts are provided by lysine 232 and lysine 238.

The protein belongs to the ATP-dependent DNA ligase family. The cofactor is a divalent metal cation.

The enzyme catalyses ATP + (deoxyribonucleotide)n-3'-hydroxyl + 5'-phospho-(deoxyribonucleotide)m = (deoxyribonucleotide)n+m + AMP + diphosphate.. In terms of biological role, DNA ligase that seals nicks in double-stranded DNA during DNA replication, DNA recombination and DNA repair in an ATP-dependent reaction. Binds specifically to DNA nicks containing a 3'-OH and a 5'-phosphate group. This chain is DNA ligase, found in Escherichia phage T7 (Bacteriophage T7).